A 434-amino-acid chain; its full sequence is Transcriptional enhancer factor TEF-3 (434 aa).

Residues 1–28 show a composition bias toward polar residues; the sequence is MEGTAGTITSNEWSSPTSPEGSTASGGS. Disordered regions lie at residues 1 to 42 and 188 to 215; these read MEGT…AEGV and QPPL…PPWQ. Positions 36–112 form a DNA-binding region, TEA; the sequence is DNDAEGVWSP…QVLARRKARE (77 aa). Residues 201–213 are compositionally biased toward pro residues; sequence GPAPSPSAPPAPP.

In terms of assembly, interacts with YAP1 and WWTR1/TAZ. Preferentially expressed in skeletal muscle. Lower levels in pancreas, placenta, and heart.

The protein localises to the nucleus. Its function is as follows. Transcription factor which plays a key role in the Hippo signaling pathway, a pathway involved in organ size control and tumor suppression by restricting proliferation and promoting apoptosis. The core of this pathway is composed of a kinase cascade wherein MST1/MST2, in complex with its regulatory protein SAV1, phosphorylates and activates LATS1/2 in complex with its regulatory protein MOB1, which in turn phosphorylates and inactivates YAP1 oncoprotein and WWTR1/TAZ. Acts by mediating gene expression of YAP1 and WWTR1/TAZ, thereby regulating cell proliferation, migration and epithelial mesenchymal transition (EMT) induction. Binds specifically and non-cooperatively to the Sph and GT-IIC 'enhansons' (5'-GTGGAATGT-3') and activates transcription. Binds to the M-CAT motif. This chain is Transcriptional enhancer factor TEF-3 (TEAD4), found in Homo sapiens (Human).